The sequence spans 156 residues: 6,7-dimethyl-8-ribityllumazine synthase (156 aa).

5-amino-6-(D-ribitylamino)uracil is bound by residues F22, 57-59 (AVE), and 81-83 (SVI). Position 86–87 (86–87 (GT)) interacts with (2S)-2-hydroxy-3-oxobutyl phosphate. Catalysis depends on H89, which acts as the Proton donor. Residue F114 coordinates 5-amino-6-(D-ribitylamino)uracil. Residue R128 coordinates (2S)-2-hydroxy-3-oxobutyl phosphate.

It belongs to the DMRL synthase family. As to quaternary structure, forms an icosahedral capsid composed of 60 subunits, arranged as a dodecamer of pentamers.

It catalyses the reaction (2S)-2-hydroxy-3-oxobutyl phosphate + 5-amino-6-(D-ribitylamino)uracil = 6,7-dimethyl-8-(1-D-ribityl)lumazine + phosphate + 2 H2O + H(+). It participates in cofactor biosynthesis; riboflavin biosynthesis; riboflavin from 2-hydroxy-3-oxobutyl phosphate and 5-amino-6-(D-ribitylamino)uracil: step 1/2. In terms of biological role, catalyzes the formation of 6,7-dimethyl-8-ribityllumazine by condensation of 5-amino-6-(D-ribitylamino)uracil with 3,4-dihydroxy-2-butanone 4-phosphate. This is the penultimate step in the biosynthesis of riboflavin. The chain is 6,7-dimethyl-8-ribityllumazine synthase from Vibrio vulnificus (strain CMCP6).